The sequence spans 898 residues: MGIVDYLVAAVSFRTLPTTFVAVLVYLAIFISVLITDELPATPKDQRGLNLTQAYSDLRQIAARPHPYNSHANDVVHDFILTRLQDATAGYDYAHVFDDKVSNGSWSSRNNSVYFEGTNILVKVDGHDADKSGALFSAHYDSVSTAPGATDDGMGVATLLQLVEYYVKHRPQRTAVFNINNGEEDWLNGAHAFLEHPWSNLTDTFLNLEGASSGGRPLLFRATATAPVRAFREKYVTHPHGNVLSSDAFARGVVRSGTDYSVYVDGRGMDGADLAFYKGRSRYHTRYDAVQYTDGGVRSLWAMMEAAQGVSGALLSSEAVHGDKGGAPVYFDLFGQALIVFPLSAMITFNIVFLVVGPIMLALLVTFDIVARHRRQEMIGGGYEEQGFFARAWTSFKSFRWVGGFWKHAKFWVALAVTVGLQVLLCVGYLYINPLIAYSSSHIVLLSFLSLAYLSTYLVHNIPSPTDTYGSHLPEQQKQAALFQLYFFTWILLLAATVVGAKLSVGSFYILSLWNAVLFAACAIGSIAGLLSSHTVEGDASYGSRRRIRGVRYDREGEEEGVESETAPTEVTPLIAQPITVVAPGGKEGEEVSGAIGWWFVQFVLSVPAVVILVSQLALLMLAATEQTLADGSPAVTVYGGASLMSVLAILPLAPFACKLHRRVAYVALVVLIASTAYAWLVFPFSERAPLKVFFQQQVDLDANITETRITGHPAYLRQAIAALPSAGGAPLNCTADDAKAGLQTCGWTPPPALEPSVIALDFNVSRSEGQNQARFEIAETDTRACRVYFDQAVTRFQVHGGTEGVQKGFEIPEEGVRELRLWSRTWDRTWVVDVDREGSALTGRVACEWSEYASGSLGVETRTRIPAYEEVLTFLPSWAVASKFADGLVEGYKAFAV.

Over 1–14 (MGIVDYLVAAVSFR) the chain is Cytoplasmic. The chain crosses the membrane as a helical span at residues 15-35 (TLPTTFVAVLVYLAIFISVLI). Residues 36-342 (TDELPATPKD…LFGQALIVFP (307 aa)) are Vacuolar-facing. N-linked (GlcNAc...) asparagine glycosylation is found at asparagine 50, asparagine 103, and asparagine 110. Histidine 139 and aspartate 151 together coordinate Zn(2+). Residue glutamate 183 is the Proton acceptor of the active site. Glutamate 184 provides a ligand contact to Zn(2+). A glycan (N-linked (GlcNAc...) asparagine) is linked at asparagine 200. Zn(2+) contacts are provided by glutamate 209 and histidine 284. Residues 343–365 (LSAMITFNIVFLVVGPIMLALLV) form a helical membrane-spanning segment. The Cytoplasmic portion of the chain corresponds to 366-411 (TFDIVARHRRQEMIGGGYEEQGFFARAWTSFKSFRWVGGFWKHAKF). Residues 412 to 432 (WVALAVTVGLQVLLCVGYLYI) traverse the membrane as a helical segment. A topological domain (vacuolar) is located at residue asparagine 433. Residues 434–454 (PLIAYSSSHIVLLSFLSLAYL) traverse the membrane as a helical segment. Residues 455–479 (STYLVHNIPSPTDTYGSHLPEQQKQ) are Cytoplasmic-facing. Residues 480–500 (AALFQLYFFTWILLLAATVVG) form a helical membrane-spanning segment. Residues 501 to 509 (AKLSVGSFY) are Vacuolar-facing. Residues 510–530 (ILSLWNAVLFAACAIGSIAGL) form a helical membrane-spanning segment. The Cytoplasmic portion of the chain corresponds to 531–593 (LSSHTVEGDA…PGGKEGEEVS (63 aa)). Residues 594 to 614 (GAIGWWFVQFVLSVPAVVILV) traverse the membrane as a helical segment. At 615 to 635 (SQLALLMLAATEQTLADGSPA) the chain is on the vacuolar side. Residues 636–656 (VTVYGGASLMSVLAILPLAPF) traverse the membrane as a helical segment. The Cytoplasmic portion of the chain corresponds to 657-664 (ACKLHRRV). Residues 665–685 (AYVALVVLIASTAYAWLVFPF) form a helical membrane-spanning segment. At 686–898 (SERAPLKVFF…LVEGYKAFAV (213 aa)) the chain is on the vacuolar side. Residues asparagine 704, asparagine 733, and asparagine 764 are each glycosylated (N-linked (GlcNAc...) asparagine).

The protein belongs to the peptidase M28 family. It depends on Zn(2+) as a cofactor.

It localises to the vacuole membrane. May be involved in vacuolar sorting and osmoregulation. This chain is Vacuolar membrane protease, found in Schizophyllum commune (strain H4-8 / FGSC 9210) (Split gill fungus).